A 153-amino-acid polypeptide reads, in one-letter code: Prophage Rz endopeptidase RzpD (153 aa).

Its function is as follows. Necessary for host cell lysis. It is believed to code for an endopeptidase that cleaves the amino-carboxyl cross-link between the diaminopimelic acid and D-alanine residues in the murein component of the bacterial cell wall. The sequence is that of Prophage Rz endopeptidase RzpD (rzpD) from Escherichia coli (strain K12).